The chain runs to 297 residues: Protease HtpX homolog (297 aa).

Helical transmembrane passes span 5–25 and 43–63; these read IFLF…VLTI and LMAL…ISLG. His154 provides a ligand contact to Zn(2+). Glu155 is a catalytic residue. His158 contacts Zn(2+). 2 consecutive transmembrane segments (helical) span residues 169–189 and 203–223; these read LLQG…AWVA and FIAM…VVFA. A Zn(2+)-binding site is contributed by Glu229.

The protein belongs to the peptidase M48B family. Requires Zn(2+) as cofactor.

The protein resides in the cell membrane. The polypeptide is Protease HtpX homolog (Bacillus velezensis (strain DSM 23117 / BGSC 10A6 / LMG 26770 / FZB42) (Bacillus amyloliquefaciens subsp. plantarum)).